A 345-amino-acid chain; its full sequence is MKKVVLLTCTIIVGGQWGDEGKGKIISYICDKDKPSIIARGGVGPNAGHTVNIGGKSYGIRMIPTGFPYKEAKLAIGAGVLVDPEVLLKEVEMLKDFNVKERLIVDYRCGIIEEKHKIMDRKDEHLAKEIGTTGSGCGPANVDRVLRILKQAKDIEELKEFLGDVSEEVNNALDRGENVLIEGTQGTLLSLYYGTYPYVTSKDTTASSFAADVGIGPTKVDEVIVVFKTFPTRVGAGPFPTEMSLEEAESLGIVEYGTVTGRRRRVGYFDFELARKACRLNGATQIALTGLDKYDKECYGVTEYNKLSEKAKEFINKIEEVTGVPVTIISTGPEMHQTIDLRNEL.

GTP-binding positions include 18 to 24 (GDEGKGK) and 48 to 50 (GHT). The active-site Proton acceptor is the aspartate 19. 2 residues coordinate Mg(2+): aspartate 19 and glycine 48. IMP-binding positions include 19–22 (DEGK), 46–49 (NAGH), threonine 133, arginine 147, glutamine 185, threonine 200, and arginine 262. Histidine 49 acts as the Proton donor in catalysis. 258–264 (TVTGRRR) contributes to the substrate binding site. GTP-binding positions include arginine 264, 290-292 (GLD), and 330-332 (STG).

Belongs to the adenylosuccinate synthetase family. Homodimer. It depends on Mg(2+) as a cofactor.

Its subcellular location is the cytoplasm. The enzyme catalyses IMP + L-aspartate + GTP = N(6)-(1,2-dicarboxyethyl)-AMP + GDP + phosphate + 2 H(+). It participates in purine metabolism; AMP biosynthesis via de novo pathway; AMP from IMP: step 1/2. Functionally, plays an important role in the de novo pathway of purine nucleotide biosynthesis. Catalyzes the first committed step in the biosynthesis of AMP from IMP. In Methanocaldococcus jannaschii (strain ATCC 43067 / DSM 2661 / JAL-1 / JCM 10045 / NBRC 100440) (Methanococcus jannaschii), this protein is Adenylosuccinate synthetase.